Consider the following 387-residue polypeptide: 3-ketoacyl-CoA thiolase (387 aa).

Cys-91 functions as the Acyl-thioester intermediate in the catalytic mechanism. Residues His-343 and Cys-373 each act as proton acceptor in the active site.

This sequence belongs to the thiolase-like superfamily. Thiolase family. In terms of assembly, heterotetramer of two alpha chains (FadB) and two beta chains (FadA).

It is found in the cytoplasm. It carries out the reaction an acyl-CoA + acetyl-CoA = a 3-oxoacyl-CoA + CoA. It participates in lipid metabolism; fatty acid beta-oxidation. In terms of biological role, catalyzes the final step of fatty acid oxidation in which acetyl-CoA is released and the CoA ester of a fatty acid two carbons shorter is formed. The chain is 3-ketoacyl-CoA thiolase from Aeromonas salmonicida (strain A449).